We begin with the raw amino-acid sequence, 390 residues long: Probable inactive secreted aspartyl protease (390 aa).

Residues 1 to 20 (MQLTIKALVGILTTISAATA) form the signal peptide. Positions 21–69 (VSFDMENLGAEKRGVSGEELHMLHGNEVLARFANGVYPEVANGTRVSKR) are cleaved as a propeptide — removed in mature form. N62 is a glycosylation site (N-linked (GlcNAc...) asparagine). The 303-residue stretch at 86–388 (WAVKAKIGSN…KFDSNEMQIA (303 aa)) folds into the Peptidase A1 domain. Active-site residues include D104 and D273. An intrachain disulfide couples C313 to C346.

Belongs to the peptidase A1 family.

The protein resides in the secreted. Probable inactive secreted aspartyl protease. May promote an inflammatory immune response in the host when the host skin barrier is breached. Has no detectable protease activity in vitro on fluorogenic substrates, a peptide library, or with the general protease substrate casein. The presence of the enzyme also does not affect the activity of the secreted aspartyl protease SAP1. The polypeptide is Probable inactive secreted aspartyl protease (Malassezia globosa (strain ATCC MYA-4612 / CBS 7966) (Dandruff-associated fungus)).